We begin with the raw amino-acid sequence, 215 residues long: UPF0056 membrane protein YhcE (215 aa).

6 consecutive transmembrane segments (helical) span residues 14–34 (FFIG…FISM), 54–74 (VAII…LFGI), 81–101 (IAGG…KLGE), 120–140 (VVPL…TIVW), 147–167 (ISYL…CWGL), and 189–209 (IMGL…IKGI).

Belongs to the UPF0056 (MarC) family.

It localises to the cell membrane. The polypeptide is UPF0056 membrane protein YhcE (ychE) (Escherichia coli (strain K12)).